A 253-amino-acid polypeptide reads, in one-letter code: Tetraspanin-3 (253 aa).

The Cytoplasmic segment spans residues 1-11 (MGQCGITSSKT). Residues 12-32 (VLVFLNLIFWGAAGILCYVGA) traverse the membrane as a helical segment. Over 33-50 (YVFITYDDYDHFFEDVYT) the chain is Extracellular. A helical membrane pass occupies residues 51 to 71 (LFPAVVIIAVGALLFIIGLIG). Over 72–85 (CCATIRESRCGLAT) the chain is Cytoplasmic. The helical transmembrane segment at 86-106 (FVFILLLVFVTEVVVVVLGYV) threads the bilayer. Residues 107–212 (YRAKVENEVD…KKLQEILMHV (106 aa)) lie on the Extracellular side of the membrane. N-linked (GlcNAc...) asparagine glycans are attached at residues asparagine 127, asparagine 152, asparagine 167, and asparagine 183. A helical membrane pass occupies residues 213–233 (IWAALAFAAIQLLGMLCACIV). Over 234–253 (LCRRSRDPAYELLITGGTYA) the chain is Cytoplasmic.

It belongs to the tetraspanin (TM4SF) family. In terms of assembly, interacts with claudin-11/CLDN11 and integrins.

The protein localises to the membrane. Regulates the proliferation and migration of oligodendrocytes, a process essential for normal myelination and repair. This is Tetraspanin-3 (Tspan3) from Mus musculus (Mouse).